Consider the following 375-residue polypeptide: MGSNKIWLRAETKPAEARSALTPTTCKALIDAGYEVTVERSTQRIFDDDEFAKVGAPLVEEGSWVKDAPKDAYILGLKELPEDDFPLEHVHISFAHCYKEQAGWEKVLSRWPRGGGVLLDLEFLTDDAGRRVAAFGFSAGYAGAALAVKNWAWQLTHPEGEPLAGEKPYANQDLLIQSVKESLQAGQKQSGKSPKILVIGALGRCGKGAVQLAKDVGIPESDIIQWDMEETKKGGPFKEIVEDADIFVNCIYLSSKIPHFVNVESLSTPSRRLSVICDVSADTTNPNNPIPVYNITTTFDKPTVPVTLPNGTQGTPLSVISIDHLPSLLPRESSEMFSEALMPSLLQLKDRENARVWKQAEDLFNQKVATLPQTA.

Residues Arg18 and Lys78 each coordinate L-saccharopine. Lys78 serves as the catalytic Proton acceptor. The active-site Proton donor is the His96. Position 101 (Gln101) interacts with L-saccharopine. Arg130 is a binding site for NAD(+). Residues Arg131 and Phe135 each coordinate L-saccharopine. Residues 203–204 (GR), Asp227, Thr231, Tyr252, and Val279 each bind NAD(+). Residues Cys205 and Cys250 are joined by a disulfide bond. Residue 280 to 282 (SAD) participates in L-saccharopine binding. 322-325 (IDHL) contacts NAD(+).

Belongs to the AlaDH/PNT family. As to quaternary structure, monomer.

It carries out the reaction L-saccharopine + NAD(+) + H2O = L-lysine + 2-oxoglutarate + NADH + H(+). It functions in the pathway amino-acid biosynthesis; L-lysine biosynthesis via AAA pathway; L-lysine from L-alpha-aminoadipate (fungal route): step 3/3. Catalyzes the NAD(+)-dependent cleavage of saccharopine to L-lysine and 2-oxoglutarate, the final step in the alpha-aminoadipate (AAA) pathway for lysin biosynthesis. The sequence is that of Saccharopine dehydrogenase [NAD(+), L-lysine-forming] from Emericella nidulans (strain FGSC A4 / ATCC 38163 / CBS 112.46 / NRRL 194 / M139) (Aspergillus nidulans).